Reading from the N-terminus, the 82-residue chain is MALSKFQLVALLITYTLLFSCQSKIVKRMQVGPSECVYRGRCRDSYECRSRCGPPEFSHETLGLCMFDYDDYEYFCCCTTNY.

An N-terminal signal peptide occupies residues 1–23; sequence MALSKFQLVALLITYTLLFSCQS. 4 disulfides stabilise this stretch: C36/C78, C42/C65, C48/C76, and C52/C77.

This sequence belongs to the DEFL family.

Its subcellular location is the secreted. This chain is Defensin-like protein 275, found in Arabidopsis thaliana (Mouse-ear cress).